Here is a 194-residue protein sequence, read N- to C-terminus: Peptidyl-tRNA hydrolase (194 aa).

Position 17 (Tyr17) interacts with tRNA. The Proton acceptor role is filled by His22. TRNA contacts are provided by Tyr68, Asn70, and Asn116.

The protein belongs to the PTH family. In terms of assembly, monomer.

Its subcellular location is the cytoplasm. The enzyme catalyses an N-acyl-L-alpha-aminoacyl-tRNA + H2O = an N-acyl-L-amino acid + a tRNA + H(+). Functionally, hydrolyzes ribosome-free peptidyl-tRNAs (with 1 or more amino acids incorporated), which drop off the ribosome during protein synthesis, or as a result of ribosome stalling. In terms of biological role, catalyzes the release of premature peptidyl moieties from peptidyl-tRNA molecules trapped in stalled 50S ribosomal subunits, and thus maintains levels of free tRNAs and 50S ribosomes. In Pseudomonas fluorescens (strain SBW25), this protein is Peptidyl-tRNA hydrolase.